A 287-amino-acid chain; its full sequence is NADH-cytochrome b5 reductase 1 (287 aa).

Residues 5–25 (FEALVTALVLAVSFIFIYGKF) form a helical membrane-spanning segment. Residues 41-145 (KDWQEFSLLT…RGPKGFYHYE (105 aa)) form the FAD-binding FR-type domain. FAD is bound by residues 125-142 (AELAIGDRIKVRGPKGFY) and 151-183 (EIGMIAGGTGISPMYQIIRAIFSNPRDKTRVCL).

Belongs to the flavoprotein pyridine nucleotide cytochrome reductase family. As to quaternary structure, monomer. Component of the 2-(3-amino-3-carboxypropyl)histidine synthase complex composed of DPH1, DPH2, DPH3 and a NADH-dependent reductase, predominantly CBR1. The cofactor is FAD.

The protein localises to the mitochondrion outer membrane. It catalyses the reaction 2 Fe(III)-[cytochrome b5] + NADH = 2 Fe(II)-[cytochrome b5] + NAD(+) + H(+). The catalysed reaction is 2 Fe(3+)-[Dph3] + NADH = 2 Fe(2+)-[Dph3] + NAD(+) + H(+). It participates in protein modification; peptidyl-diphthamide biosynthesis. Functionally, NADH-dependent reductase for DPH3 and cytochrome b5. Required for the first step of diphthamide biosynthesis, a post-translational modification of histidine which occurs in elongation factor 2. DPH1 and DPH2 transfer a 3-amino-3-carboxypropyl (ACP) group from S-adenosyl-L-methionine (SAM) to a histidine residue, the reaction is assisted by a reduction system comprising DPH3 and a NADH-dependent reductase, predominantly CBR1. By reducing DPH3, also involved in the formation of the tRNA wobble base modification mcm5s 2U (5-methoxycarbonylmethyl-2-thiouridine), mediated by the elongator complex. The cytochrome b5/NADH cytochrome b5 reductase electron transfer system supports the catalytic activity of several sterol biosynthetic enzymes. This Eremothecium gossypii (strain ATCC 10895 / CBS 109.51 / FGSC 9923 / NRRL Y-1056) (Yeast) protein is NADH-cytochrome b5 reductase 1 (CBR1).